Here is a 214-residue protein sequence, read N- to C-terminus: MRIILLGAPGAGKGTQANFIMDKYGIPQISTGDMLRAAIKAGTELGKQAKAVIDAGQLVSDEIILGLIKERIAQDDCEKGFLLDGFPRTIPQADGLKEMGVEVDYVIEFDVADDVIVERMAGRRAHLPSGRTYHVVYNPPKVEGKDDVTGEDLVVRDDDKEETVRARLGVYHEQTAPLIDYYGKEAAAGKTKYLKFDGTKQVAEVSADIEKALA.

10–15 serves as a coordination point for ATP; the sequence is GAGKGT. Positions 30 to 59 are NMP; it reads STGDMLRAAIKAGTELGKQAKAVIDAGQLV. Residues T31, R36, 57–59, 85–88, and Q92 each bind AMP; these read QLV and GFPR. Residues 122–159 are LID; sequence GRRAHLPSGRTYHVVYNPPKVEGKDDVTGEDLVVRDDD. ATP-binding positions include R123 and 132–133; that span reads TY. Residues R156 and R167 each contribute to the AMP site. K200 lines the ATP pocket.

This sequence belongs to the adenylate kinase family. In terms of assembly, monomer.

The protein resides in the cytoplasm. The enzyme catalyses AMP + ATP = 2 ADP. The protein operates within purine metabolism; AMP biosynthesis via salvage pathway; AMP from ADP: step 1/1. Its function is as follows. Catalyzes the reversible transfer of the terminal phosphate group between ATP and AMP. Plays an important role in cellular energy homeostasis and in adenine nucleotide metabolism. In Vibrio parahaemolyticus serotype O3:K6 (strain RIMD 2210633), this protein is Adenylate kinase.